The following is a 180-amino-acid chain: UPF0227 protein Ent638_1623 (180 aa).

It belongs to the UPF0227 family.

The protein is UPF0227 protein Ent638_1623 of Enterobacter sp. (strain 638).